The chain runs to 490 residues: Betaine aldehyde dehydrogenase (490 aa).

Residues S26, I27, and D93 each coordinate K(+). 150–152 lines the NAD(+) pocket; it reads GAW. Catalysis depends on K162, which acts as the Charge relay system. Residues 176 to 179 and 230 to 233 each bind NAD(+); these read KPSE and GVET. K(+) is bound at residue L246. Residue E252 is the Proton acceptor of the active site. NAD(+)-binding residues include G254, C286, and E387. Catalysis depends on C286, which acts as the Nucleophile. C286 carries the post-translational modification Cysteine sulfenic acid (-SOH). 2 residues coordinate K(+): K457 and G460. The active-site Charge relay system is E464.

It belongs to the aldehyde dehydrogenase family. As to quaternary structure, dimer of dimers. The cofactor is K(+).

It carries out the reaction betaine aldehyde + NAD(+) + H2O = glycine betaine + NADH + 2 H(+). It participates in amine and polyamine biosynthesis; betaine biosynthesis via choline pathway; betaine from betaine aldehyde: step 1/1. Functionally, involved in the biosynthesis of the osmoprotectant glycine betaine. Catalyzes the irreversible oxidation of betaine aldehyde to the corresponding acid. The sequence is that of Betaine aldehyde dehydrogenase from Acinetobacter baumannii (strain ACICU).